Here is a 245-residue protein sequence, read N- to C-terminus: Neurovirulence factor ICP34.5 (245 aa).

The segment covering 1–15 (MARRRRRHRGPRRPR) has biased composition (basic residues). Positions 1–17 (MARRRRRHRGPRRPRPP) are required for nucleolar localization. Disordered stretches follow at residues 1 to 122 (MARR…PFRL) and 143 to 172 (RRAG…PATP). Residues 25 to 36 (TAQSQVTSTPNS) show a composition bias toward polar residues. Acidic residues predominate over residues 67–77 (ASDDDDDDDWP). 2 stretches are compositionally biased toward pro residues: residues 78-87 (DSPPPEPAPE) and 113-122 (SHPPSRPFRL). The Nuclear export signal motif lies at 122–131 (LPPRLALRLR). Repeat copies occupy residues 155-157 (ATP), 158-160 (ATP), 161-163 (ATP), 164-166 (ATP), 167-169 (ATP), and 170-172 (ATP). The 6 X 3 AA tandem repeats of A-T-P stretch occupies residues 155–172 (ATPATPATPATPATPATP). Residues 158–172 (ATPATPATPATPATP) show a composition bias toward low complexity. The interval 172–185 (PARVRFSPHVRVRH) is binding to PP1CA. The interval 172–185 (PARVRFSPHVRVRH) is interaction with host PPP1CA. The important for interferon resistance stretch occupies residues 187–245 (VVWASAARLARRGSWARERADRARFRRRVAEAEAVIGPCLGPEARARALARGAGPANSV). Positions 197–215 (RRGSWARERADRARFRRRV) match the Bipartite nuclear localization signal motif. Positions 215 to 230 (VAEAEAVIGPCLGPEA) are interaction with host EIF2S1/EIF-2ALPHA.

The protein belongs to the PPP1R15 family. In terms of assembly, interacts with host PPP1CA to form a high-molecular-weight complex that dephosphorylates EIF2S1/eIF-2alpha. Interacts with host EIF2S1/eIF-2alpha; this interaction is crucial for the specific dephosphorylation of EIF2S1/eIF-2alpha by PPP1CA. Binds to proliferating cell nuclear antigen (PCNA), which may release host cells from growth arrest and facilitate viral replication. Interacts (via N-terminus) with host C1QBP and PRKCA. Interacts with protein UL31. Interacts with host TBK1. Interacts with host STING/TMEM173; this interaction inhibits the intracellular DNA sensing pathway. Interacts with host BECN1; this interaction modulates host autophagy.

The protein localises to the host cytoplasm. Its subcellular location is the host nucleus. The protein resides in the host nucleolus. It localises to the virion. Its function is as follows. Inhibits the establishment of the immune response and of the integrated stress response (ISR) in the infected cell. Plays essential roles in viral nuclear egress to mediate capsid transit across the nuclear membrane. Facilitates nuclear egress cooperatively with host C1QBP and protein kinase C/PKC to induce lamin A/C phosphorylation and subsequent reorganization. In turn, lamina disassembles and nuclear egress occurs. Recruits the serine/threonine protein phosphatase PPP1CA/PP1-alpha to dephosphorylate the translation initiation factor EIF2S1/eIF-2alpha, thereby couteracting the host shutoff of protein synthesis involving double-stranded RNA-dependent protein kinase EIF2AK2/PKR. In turn, controls host IRF3 activation and subsequently inhibits host interferon response. Controls the DNA sensing pathway by interacting with and inhibiting host STING/TMEM173. Also down-modulates the host MHC class II proteins cell surface expression. Acts as a neurovirulence factor that has a profound effect on the growth of the virus in central nervous system tissue, by interacting with host BECN1 and thereby antagonizing the host autophagy response. The chain is Neurovirulence factor ICP34.5 (RL1) from Homo sapiens (Human).